A 123-amino-acid polypeptide reads, in one-letter code: Insulin-like peptide-1 (123 aa).

The N-terminal stretch at 1–24 is a signal peptide; that stretch reads MTTSSYFLLVALGLLLYVCQSSFG. 4 disulfides stabilise this stretch: C29/C106, C41/C109, C53/C122, and C108/C113. Position 34 is a 4-hydroxyproline; partial (P34). Residues 59–102 constitute a propeptide, c peptide; it reads EQGGANNARAYTGRTSSLMKRRGFLSLLKKRGKRDEGSLQRSGR. E107 is modified (4-carboxyglutamate). E117 is modified (4-carboxyglutamate; partial).

The protein belongs to the insulin family. As to quaternary structure, heterodimer of A and B chains; disulfide-linked. As to expression, expressed by the venom duct.

It is found in the secreted. This venom insulin facilitates prey capture by rapidly inducing hypoglycemic shock. Intraperitoneal injection of this peptide into zebrafish lowers blood glucose with the same potency than human insulin. In vivo, when applied to water, this peptide reduces overall locomotor activity of zebrafish larvae, observed as a significant decrease in the percentage of time spent swimming and movement frequency. The protein is Insulin-like peptide-1 of Conus victoriae (Queen Victoria cone).